Reading from the N-terminus, the 509-residue chain is Cardiolipin synthase 1 (509 aa).

A run of 3 helical transmembrane segments spans residues 4-24 (PIVQ…LLNT), 30-50 (YTFV…VIFI), and 59-79 (LAWF…YAIF). PLD phosphodiesterase domains are found at residues 238–265 (VNYR…GDEY) and 422–449 (KDGF…DVRS). Residues histidine 243, lysine 245, aspartate 250, histidine 427, lysine 429, and aspartate 434 contribute to the active site.

This sequence belongs to the phospholipase D family. Cardiolipin synthase subfamily.

It is found in the cell membrane. The enzyme catalyses 2 a 1,2-diacyl-sn-glycero-3-phospho-(1'-sn-glycerol) = a cardiolipin + glycerol. Catalyzes the reversible phosphatidyl group transfer from one phosphatidylglycerol molecule to another to form cardiolipin (CL) (diphosphatidylglycerol) and glycerol. The polypeptide is Cardiolipin synthase 1 (cls1) (Bacillus cereus (strain ATCC 14579 / DSM 31 / CCUG 7414 / JCM 2152 / NBRC 15305 / NCIMB 9373 / NCTC 2599 / NRRL B-3711)).